Here is a 323-residue protein sequence, read N- to C-terminus: Methionyl-tRNA formyltransferase (323 aa).

(6S)-5,6,7,8-tetrahydrofolate is bound at residue 115–118 (SLLP).

This sequence belongs to the Fmt family.

It carries out the reaction L-methionyl-tRNA(fMet) + (6R)-10-formyltetrahydrofolate = N-formyl-L-methionyl-tRNA(fMet) + (6S)-5,6,7,8-tetrahydrofolate + H(+). Its function is as follows. Attaches a formyl group to the free amino group of methionyl-tRNA(fMet). The formyl group appears to play a dual role in the initiator identity of N-formylmethionyl-tRNA by promoting its recognition by IF2 and preventing the misappropriation of this tRNA by the elongation apparatus. This chain is Methionyl-tRNA formyltransferase, found in Blochmanniella floridana.